Reading from the N-terminus, the 179-residue chain is Large ribosomal subunit protein uL5 (179 aa).

It belongs to the universal ribosomal protein uL5 family. Part of the 50S ribosomal subunit; part of the 5S rRNA/L5/L18/L25 subcomplex. Contacts the 5S rRNA and the P site tRNA. Forms a bridge to the 30S subunit in the 70S ribosome.

This is one of the proteins that bind and probably mediate the attachment of the 5S RNA into the large ribosomal subunit, where it forms part of the central protuberance. In the 70S ribosome it contacts protein S13 of the 30S subunit (bridge B1b), connecting the 2 subunits; this bridge is implicated in subunit movement. Contacts the P site tRNA; the 5S rRNA and some of its associated proteins might help stabilize positioning of ribosome-bound tRNAs. This is Large ribosomal subunit protein uL5 from Cronobacter sakazakii (strain ATCC BAA-894) (Enterobacter sakazakii).